A 1050-amino-acid chain; its full sequence is Toluene efflux pump membrane transporter TtgB (1050 aa).

12 helical membrane-spanning segments follow: residues 10-30 (IFAW…ILKL), 339-359 (GVIH…YLFL), 370-390 (MTVP…GFSI), 393-413 (LTMF…IVVV), 440-460 (GALV…AFFG), 472-492 (ITIV…TPAL), 539-559 (VPFL…FARI), 871-891 (MPAL…ALYE), 893-913 (WSIP…ALIA), 923-943 (VYFL…AILI), 972-992 (IIMT…ASGA), and 1004-1024 (VIGG…LFFV).

Belongs to the resistance-nodulation-cell division (RND) (TC 2.A.6) family.

It localises to the cell inner membrane. In terms of biological role, the inner membrane transporter component of a constitutive organic solvent efflux system. Involved in export of toluene, styrene, m-xylene, propylbenzene and ethylbenzene. Also exports AMP and the antibiotics carbenicillin, nalidixic acid, chloramphenicol and tetracycline. The protein is Toluene efflux pump membrane transporter TtgB (ttgB) of Pseudomonas putida (strain DOT-T1E).